The following is a 206-amino-acid chain: Large ribosomal subunit protein mL62 (206 aa).

The N-terminal 29 residues, 1–29, are a transit peptide targeting the mitochondrion; sequence MAAARCLRWGLSRAEAWLLPPPTSCCHRA. The residue at position 90 (Gln-90) is an N5-methylglutamine.

The protein belongs to the prokaryotic/mitochondrial release factor family. Mitochondrion-specific ribosomal protein mL62 subfamily. In terms of assembly, component of the mitochondrial ribosome large subunit (39S) which comprises a 16S rRNA and about 50 distinct proteins. Post-translationally, methylation of glutamine in the GGQ triplet by HEMK1.

It is found in the mitochondrion. It catalyses the reaction an N-acyl-L-alpha-aminoacyl-tRNA + H2O = an N-acyl-L-amino acid + a tRNA + H(+). Its function is as follows. Essential peptidyl-tRNA hydrolase component of the mitochondrial large ribosomal subunit. Acts as a codon-independent translation release factor that has lost all stop codon specificity and directs the termination of translation in mitochondrion, possibly in case of abortive elongation. May be involved in the hydrolysis of peptidyl-tRNAs that have been prematurely terminated and thus in the recycling of stalled mitochondrial ribosomes. The sequence is that of Large ribosomal subunit protein mL62 from Bos taurus (Bovine).